The primary structure comprises 708 residues: MKLLFLALLSLLALGPSLAARRRGVRWCTISKPEAAKCSKLQQNLKRVRGPSLSCISRKSYLECIQAIAAKRADAMSLDAGLVYEAGQDPYRLRPVAAEVYGTEGAPRTHYYAVALVKKDSNLQLNQLQGVRSCHTGLNRSAGWKIPVGTLRPYLGWAGPPAPLQEAVANFFSASCVPCADGNQYPNLCRLCAGTGADKCACSSKEPYFGYSGAFKCLKDGAGDVAFVKDSTVFENLPNKAERDQYELLCPDNTRKPVDEFEQCHLARVPSHAVVARSVGGKEDSIWRLLSKAQEKFGKGTSGSFQLFSSPPGQKDLLFKDGAQGFLRIPSRVDAELYLGPSYLTVIKNLKESAAEVEARGARVVWCAVGPEELRKCQQWSGQSNGTVTCTTAADTEDCIALVLKGEADAMSLDGGVIYIAGKCGLAPVLAESQRSEGGSNLDCVNRPLEGDRAVAVVRKSSAGLTWNSRRGTKSCHTAVGRTAGWNIPMGLLFNQTRSCNFDEFFSQSCAPGADPNSNLCALCVGNEQGQDKCAPNSNERYFSYAGSFRCLVENAGDVAFVKASTVLENPDGRGTEAWAKDLKLEDFELLCLDGTRKPVSEFETCHLARAPSHGVVSRKDRVQYLEQVLLDQQGKFGRNGPLCPGKFCLFQSETKNLLFNDNTECLAKLQGKTTYEKYLGPEYVTAVANLRQCSTSPLLEACTFLRN.

The first 19 residues, 1 to 19 (MKLLFLALLSLLALGPSLA), serve as a signal peptide directing secretion. Transferrin-like domains are found at residues 25–352 (VRWC…NLKE) and 364–693 (VVWC…NLRQ). 2 disulfide bridges follow: Cys-28/Cys-64 and Cys-38/Cys-55. Asp-79 lines the Fe(3+) pocket. Arg-92 is an active-site residue. Tyr-111 lines the Fe(3+) pocket. 5 disulfide bridges follow: Cys-134-Cys-217, Cys-176-Cys-192, Cys-179-Cys-202, Cys-189-Cys-200, and Cys-250-Cys-264. Thr-136 is a binding site for hydrogencarbonate. Asn-139 carries an N-linked (GlcNAc...) asparagine glycan. Arg-140, Ala-142, and Gly-143 together coordinate hydrogencarbonate. Fe(3+) is bound at residue Tyr-211. Residue His-272 participates in Fe(3+) binding. Ser-278 serves as the catalytic Nucleophile. 2 disulfides stabilise this stretch: Cys-367/Cys-399 and Cys-377/Cys-390. The N-linked (GlcNAc...) asparagine glycan is linked to Asn-385. Fe(3+) contacts are provided by Asp-414 and Asp-452. 4 cysteine pairs are disulfide-bonded: Cys-476/Cys-551, Cys-510/Cys-524, Cys-521/Cys-534, and Cys-592/Cys-606. 4 residues coordinate hydrogencarbonate: Thr-478, Arg-482, Ala-484, and Gly-485. Asn-495 carries N-linked (GlcNAc...) asparagine glycosylation. Fe(3+) is bound at residue Tyr-545. His-614 provides a ligand contact to Fe(3+).

The protein belongs to the transferrin family. As to quaternary structure, monomer. Found in a complex with LTF, CLU, EPPIN and SEMG1. Interacts with prey activated coagulation factor X; the interaction inhibits coagulation factor X catalytic activity. Found in a complex with MPO and LTF; interacts directly with CP, allows Fe(3+) incorporation into LTF and activation of CP ferroxidase activity. Post-translationally, N-glycosylated. Glycosylation is important for draculin anticoagulant activity. Probably also O-glycosylated. As to expression, expressed in the submaxillary gland and secreted in the saliva (at protein level).

It localises to the secreted. Its function is as follows. Transferrins are iron binding transport proteins which can bind two Fe(3+) ions in association with the binding of an anion, usually bicarbonate. Functionally, major iron-binding and multifunctional protein found in exocrine fluids such as breast milk and mucosal secretions. Has antimicrobial activity. Antimicrobial properties may include bacteriostasis, which is related to its ability to sequester free iron and thus inhibit microbial growth, as well as direct bactericidal properties leading to the release of lipopolysaccharides from the bacterial outer membrane. May have anabolic, differentiating and anti-apoptotic effects on osteoblasts and may also inhibit osteoclastogenesis, possibly playing a role in the regulation of bone growth. May interfere with the lipopolysaccharide (LPS)-stimulated TLR4 signaling. The lactotransferrin transferrin-like domain 1 functions as a serine protease of the peptidase S60 family that cuts arginine rich regions. This function contributes to the antimicrobial activity. Shows a preferential cleavage at -Arg-Ser-Arg-Arg-|- and -Arg-Arg-Ser-Arg-|-, and of Z-Phe-Arg-|-aminomethylcoumarin sites. In terms of biological role, acts as an anticoagulant of the blood coagulation cascade of the bat's prey by inhibiting coagulation factor IX and activated coagulation factor X. The protein is Lactotransferrin of Desmodus rotundus (Vampire bat).